A 237-amino-acid chain; its full sequence is Class B acid phosphatase (237 aa).

A signal peptide spans methionine 1–alanine 23. The Nucleophile role is filled by aspartate 69. Mg(2+) contacts are provided by aspartate 69 and aspartate 71. The active-site Proton donor is aspartate 71. Residues threonine 137 to glycine 138 and lysine 177 contribute to the substrate site. Mg(2+) is bound at residue aspartate 192.

This sequence belongs to the class B bacterial acid phosphatase family. As to quaternary structure, homotetramer. Requires Mg(2+) as cofactor.

The protein resides in the periplasm. It carries out the reaction a phosphate monoester + H2O = an alcohol + phosphate. Its function is as follows. Dephosphorylates several organic phosphate monoesters. Also has a phosphotransferase activity catalyzing the transfer of low-energy phosphate groups from organic phosphate monoesters to free hydroxyl groups of various organic compounds. The protein is Class B acid phosphatase of Salmonella arizonae (strain ATCC BAA-731 / CDC346-86 / RSK2980).